We begin with the raw amino-acid sequence, 196 residues long: Ribosomal RNA large subunit methyltransferase E (196 aa).

S-adenosyl-L-methionine contacts are provided by Gly52, Trp54, Asp72, Asp88, and Asp111. The active-site Proton acceptor is the Lys151.

The protein belongs to the class I-like SAM-binding methyltransferase superfamily. RNA methyltransferase RlmE family.

The protein localises to the cytoplasm. It catalyses the reaction uridine(2552) in 23S rRNA + S-adenosyl-L-methionine = 2'-O-methyluridine(2552) in 23S rRNA + S-adenosyl-L-homocysteine + H(+). Functionally, specifically methylates the uridine in position 2552 of 23S rRNA at the 2'-O position of the ribose in the fully assembled 50S ribosomal subunit. This chain is Ribosomal RNA large subunit methyltransferase E, found in Cenarchaeum symbiosum (strain A).